The chain runs to 120 residues: Ribonuclease P protein component (120 aa).

Belongs to the RnpA family. In terms of assembly, consists of a catalytic RNA component (M1 or rnpB) and a protein subunit.

The enzyme catalyses Endonucleolytic cleavage of RNA, removing 5'-extranucleotides from tRNA precursor.. Functionally, RNaseP catalyzes the removal of the 5'-leader sequence from pre-tRNA to produce the mature 5'-terminus. It can also cleave other RNA substrates such as 4.5S RNA. The protein component plays an auxiliary but essential role in vivo by binding to the 5'-leader sequence and broadening the substrate specificity of the ribozyme. The sequence is that of Ribonuclease P protein component from Chlamydia trachomatis serovar L2 (strain ATCC VR-902B / DSM 19102 / 434/Bu).